The following is a 442-amino-acid chain: Transducin beta-like protein 2 (442 aa).

The interval 36–71 is disordered; that stretch reads EKPSQPVCQKENEPKKSGSKKQKQNQRVRKEKPQQH. The segment covering 52 to 65 has biased composition (basic residues); sequence SGSKKQKQNQRVRK. 7 WD repeats span residues 84–123, 130–170, 182–222, 224–263, 273–312, 323–362, and 366–404; these read SHSG…QREH, VELD…DGGF, KHKA…STIN, NQMN…GEFQ, GHSA…KKQQ, EEAS…KEEY, and VHGE…RAVV. Residue K164 forms a Glycyl lysine isopeptide (Lys-Gly) (interchain with G-Cter in SUMO2) linkage. At T428 the chain carries Phosphothreonine.

The polypeptide is Transducin beta-like protein 2 (Tbl2) (Mus musculus (Mouse)).